Consider the following 662-residue polypeptide: Protein Aster-C (662 aa).

Residues 1 to 34 form a disordered region; that stretch reads MEGAPTVRQVMNEGDSSLATDLQEDVEENPSPTV. Residues 69-136 enclose the GRAM domain; sequence EEYRRQFTHL…KNITFMTKEK (68 aa). Disordered stretches follow at residues 212 to 237 and 249 to 284; these read SIED…EKLS and RVSE…LPTL. Over residues 265-276 the composition is skewed to basic and acidic residues; that stretch reads LGKEESQNEKQT. One can recognise a VASt domain in the interval 326–497; that stretch reads HGRLFINRIF…DLLIEESVLN (172 aa). Residues 557 to 577 traverse the membrane as a helical segment; it reads LIVVMSIFVLLLVLLNVTLFL.

It is found in the endoplasmic reticulum membrane. It localises to the cell membrane. Functionally, cholesterol transporter that mediates non-vesicular transport of cholesterol from the plasma membrane (PM) to the endoplasmic reticulum (ER). Contains unique domains for binding cholesterol and the PM, thereby serving as a molecular bridge for the transfer of cholesterol from the PM to the ER. Plays a crucial role in cholesterol homeostasis and has the unique ability to localize to the PM based on the level of membrane cholesterol. In lipid-poor conditions localizes to the ER membrane and in response to excess cholesterol in the PM is recruited to the endoplasmic reticulum-plasma membrane contact sites (EPCS) which is mediated by the GRAM domain. At the EPCS, the sterol-binding VASt/ASTER domain binds to the cholesterol in the PM and facilitates its transfer from the PM to ER. In Homo sapiens (Human), this protein is Protein Aster-C (GRAMD1C).